Reading from the N-terminus, the 460-residue chain is Bifunctional protein GlmU (460 aa).

The tract at residues 1 to 235 (MALSAAIVLA…PLTVEGVNDR (235 aa)) is pyrophosphorylase. UDP-N-acetyl-alpha-D-glucosamine-binding positions include 9 to 12 (LAAG), K23, Q76, and 81 to 82 (GT). Position 109 (D109) interacts with Mg(2+). UDP-N-acetyl-alpha-D-glucosamine-binding residues include G146, E161, N176, and N233. Residue N233 participates in Mg(2+) binding. A linker region spans residues 236 to 256 (VQLAALSKTYNRRVCERWMRN). The interval 257 to 460 (GVTILDPETT…VEGWKPAWER (204 aa)) is N-acetyltransferase. Residues R338 and K356 each contribute to the UDP-N-acetyl-alpha-D-glucosamine site. Residue H368 is the Proton acceptor of the active site. Y371 and N382 together coordinate UDP-N-acetyl-alpha-D-glucosamine. Residues 391–392 (NY) and A428 each bind acetyl-CoA.

The protein in the N-terminal section; belongs to the N-acetylglucosamine-1-phosphate uridyltransferase family. It in the C-terminal section; belongs to the transferase hexapeptide repeat family. In terms of assembly, homotrimer. Requires Mg(2+) as cofactor.

The protein resides in the cytoplasm. The enzyme catalyses alpha-D-glucosamine 1-phosphate + acetyl-CoA = N-acetyl-alpha-D-glucosamine 1-phosphate + CoA + H(+). The catalysed reaction is N-acetyl-alpha-D-glucosamine 1-phosphate + UTP + H(+) = UDP-N-acetyl-alpha-D-glucosamine + diphosphate. Its pathway is nucleotide-sugar biosynthesis; UDP-N-acetyl-alpha-D-glucosamine biosynthesis; N-acetyl-alpha-D-glucosamine 1-phosphate from alpha-D-glucosamine 6-phosphate (route II): step 2/2. It functions in the pathway nucleotide-sugar biosynthesis; UDP-N-acetyl-alpha-D-glucosamine biosynthesis; UDP-N-acetyl-alpha-D-glucosamine from N-acetyl-alpha-D-glucosamine 1-phosphate: step 1/1. The protein operates within bacterial outer membrane biogenesis; LPS lipid A biosynthesis. Functionally, catalyzes the last two sequential reactions in the de novo biosynthetic pathway for UDP-N-acetylglucosamine (UDP-GlcNAc). The C-terminal domain catalyzes the transfer of acetyl group from acetyl coenzyme A to glucosamine-1-phosphate (GlcN-1-P) to produce N-acetylglucosamine-1-phosphate (GlcNAc-1-P), which is converted into UDP-GlcNAc by the transfer of uridine 5-monophosphate (from uridine 5-triphosphate), a reaction catalyzed by the N-terminal domain. The chain is Bifunctional protein GlmU from Bifidobacterium longum subsp. infantis (strain ATCC 15697 / DSM 20088 / JCM 1222 / NCTC 11817 / S12).